The primary structure comprises 311 residues: Coproporphyrin III ferrochelatase 1 (311 aa).

Fe-coproporphyrin III is bound by residues Tyr12, Arg29, 45-46 (RY), Ser53, and Tyr124. Fe(2+) contacts are provided by His182 and Glu263.

This sequence belongs to the ferrochelatase family.

Its subcellular location is the cytoplasm. The catalysed reaction is Fe-coproporphyrin III + 2 H(+) = coproporphyrin III + Fe(2+). It participates in porphyrin-containing compound metabolism; protoheme biosynthesis. Functionally, involved in coproporphyrin-dependent heme b biosynthesis. Catalyzes the insertion of ferrous iron into coproporphyrin III to form Fe-coproporphyrin III. The polypeptide is Coproporphyrin III ferrochelatase 1 (Bacillus anthracis).